Consider the following 1076-residue polypeptide: Bifunctional glutamine synthetase adenylyltransferase/adenylyl-removing enzyme (1076 aa).

The tract at residues Met-1–Met-521 is adenylyl removase. Residues Val-524 to Arg-1076 form an adenylyl transferase region. Low complexity predominate over residues Thr-1042 to Pro-1056. The segment at Thr-1042 to Arg-1076 is disordered.

Belongs to the GlnE family. It depends on Mg(2+) as a cofactor.

The catalysed reaction is [glutamine synthetase]-O(4)-(5'-adenylyl)-L-tyrosine + phosphate = [glutamine synthetase]-L-tyrosine + ADP. The enzyme catalyses [glutamine synthetase]-L-tyrosine + ATP = [glutamine synthetase]-O(4)-(5'-adenylyl)-L-tyrosine + diphosphate. In terms of biological role, involved in the regulation of glutamine synthetase GlnA, a key enzyme in the process to assimilate ammonia. When cellular nitrogen levels are high, the C-terminal adenylyl transferase (AT) inactivates GlnA by covalent transfer of an adenylyl group from ATP to specific tyrosine residue of GlnA, thus reducing its activity. Conversely, when nitrogen levels are low, the N-terminal adenylyl removase (AR) activates GlnA by removing the adenylyl group by phosphorolysis, increasing its activity. The regulatory region of GlnE binds the signal transduction protein PII (GlnB) which indicates the nitrogen status of the cell. The chain is Bifunctional glutamine synthetase adenylyltransferase/adenylyl-removing enzyme from Bifidobacterium longum (strain NCC 2705).